Consider the following 163-residue polypeptide: Beta-carbonic anhydrase 1 (163 aa).

4 residues coordinate Zn(2+): Cys35, Asp37, His88, and Cys91.

This sequence belongs to the beta-class carbonic anhydrase family. As to quaternary structure, homotetramer. Zn(2+) serves as cofactor.

It catalyses the reaction hydrogencarbonate + H(+) = CO2 + H2O. Catalyzes the reversible hydration of carbon dioxide to form bicarbonate. This Mycobacterium bovis (strain ATCC BAA-935 / AF2122/97) protein is Beta-carbonic anhydrase 1.